A 1859-amino-acid chain; its full sequence is Y' element ATP-dependent helicase protein 1 copy 6 (1859 aa).

The Helicase ATP-binding domain occupies 861–1038; it reads EIYMADTPSV…LQRIGLTGLA (178 aa). Position 874–881 (874–881) interacts with ATP; it reads APPGYGKT. Residues 1095–1244 enclose the Helicase C-terminal domain; it reads KLLLALFEIE…EFYGLESKKG (150 aa). Low complexity predominate over residues 1318–1461; sequence ANASTNATTN…ATTTESTNAS (144 aa). Residues 1318–1485 are disordered; it reads ANASTNATTN…RFHPVTDINK (168 aa). Residues 1462 to 1485 are compositionally biased toward basic and acidic residues; the sequence is AKEDANKDGNAEDNRFHPVTDINK.

It belongs to the helicase family. Yeast subtelomeric Y' repeat subfamily.

In terms of biological role, catalyzes DNA unwinding and is involved in telomerase-independent telomere maintenance. In Saccharomyces cerevisiae (strain ATCC 204508 / S288c) (Baker's yeast), this protein is Y' element ATP-dependent helicase protein 1 copy 6 (YRF1-6).